The sequence spans 938 residues: Isoleucine--tRNA ligase (938 aa).

A 'HIGH' region motif is present at residues 61–71 (PYANGDIHLGT). Position 559 (Glu559) interacts with L-isoleucyl-5'-AMP. Positions 601-605 (KMSKS) match the 'KMSKS' region motif. Residue Lys604 coordinates ATP. Residues Cys904, Cys907, Cys923, and Cys926 each coordinate Zn(2+).

This sequence belongs to the class-I aminoacyl-tRNA synthetase family. IleS type 1 subfamily. In terms of assembly, monomer. Zn(2+) serves as cofactor.

It is found in the cytoplasm. It catalyses the reaction tRNA(Ile) + L-isoleucine + ATP = L-isoleucyl-tRNA(Ile) + AMP + diphosphate. Its function is as follows. Catalyzes the attachment of isoleucine to tRNA(Ile). As IleRS can inadvertently accommodate and process structurally similar amino acids such as valine, to avoid such errors it has two additional distinct tRNA(Ile)-dependent editing activities. One activity is designated as 'pretransfer' editing and involves the hydrolysis of activated Val-AMP. The other activity is designated 'posttransfer' editing and involves deacylation of mischarged Val-tRNA(Ile). This Symbiobacterium thermophilum (strain DSM 24528 / JCM 14929 / IAM 14863 / T) protein is Isoleucine--tRNA ligase.